The sequence spans 157 residues: 6,7-dimethyl-8-ribityllumazine synthase (157 aa).

Residues Phe24, 56–58 (SFE), and 79–81 (VLI) each bind 5-amino-6-(D-ribitylamino)uracil. Residue 84–85 (ET) coordinates (2S)-2-hydroxy-3-oxobutyl phosphate. His87 acts as the Proton donor in catalysis. Phe112 is a 5-amino-6-(D-ribitylamino)uracil binding site. Arg126 provides a ligand contact to (2S)-2-hydroxy-3-oxobutyl phosphate.

It belongs to the DMRL synthase family.

It catalyses the reaction (2S)-2-hydroxy-3-oxobutyl phosphate + 5-amino-6-(D-ribitylamino)uracil = 6,7-dimethyl-8-(1-D-ribityl)lumazine + phosphate + 2 H2O + H(+). It participates in cofactor biosynthesis; riboflavin biosynthesis; riboflavin from 2-hydroxy-3-oxobutyl phosphate and 5-amino-6-(D-ribitylamino)uracil: step 1/2. Catalyzes the formation of 6,7-dimethyl-8-ribityllumazine by condensation of 5-amino-6-(D-ribitylamino)uracil with 3,4-dihydroxy-2-butanone 4-phosphate. This is the penultimate step in the biosynthesis of riboflavin. The sequence is that of 6,7-dimethyl-8-ribityllumazine synthase from Pyrococcus furiosus (strain ATCC 43587 / DSM 3638 / JCM 8422 / Vc1).